Consider the following 231-residue polypeptide: UPF0749 protein YlxW (231 aa).

The signal sequence occupies residues 1–34 (MRGKSAVLLSLIMLIAGFLISFSFQMTKENNKSA). Residues 44–94 (YALRDELLKQEKENKKFEKELYQKQNKVRQAENKLKKEKSEYYNVLEDTEK) are a coiled coil.

Belongs to the UPF0749 family.

Its function is as follows. May be involved in cell division and sporulation. The protein is UPF0749 protein YlxW (ylxW) of Bacillus subtilis (strain 168).